A 144-amino-acid polypeptide reads, in one-letter code: Large ribosomal subunit protein uL16 (144 aa).

A compositionally biased stretch (basic residues) spans 1–14 (MLMPKRVKYRKPHR). A disordered region spans residues 1-25 (MLMPKRVKYRKPHRPGTQGKATRGN).

Belongs to the universal ribosomal protein uL16 family. As to quaternary structure, part of the 50S ribosomal subunit.

In terms of biological role, binds 23S rRNA and is also seen to make contacts with the A and possibly P site tRNAs. The polypeptide is Large ribosomal subunit protein uL16 (Moorella thermoacetica (strain ATCC 39073 / JCM 9320)).